The following is a 161-amino-acid chain: Phosphopantetheine adenylyltransferase (161 aa).

Residue Ser11 coordinates substrate. ATP-binding positions include 11 to 12 (SF) and His19. The substrate site is built by Lys43, Leu75, and Arg89. ATP-binding positions include 90-92 (GLR), Glu100, and 125-131 (YSFISSS).

It belongs to the bacterial CoaD family. Homohexamer. Requires Mg(2+) as cofactor.

It is found in the cytoplasm. It carries out the reaction (R)-4'-phosphopantetheine + ATP + H(+) = 3'-dephospho-CoA + diphosphate. The protein operates within cofactor biosynthesis; coenzyme A biosynthesis; CoA from (R)-pantothenate: step 4/5. Reversibly transfers an adenylyl group from ATP to 4'-phosphopantetheine, yielding dephospho-CoA (dPCoA) and pyrophosphate. The protein is Phosphopantetheine adenylyltransferase of Staphylococcus epidermidis (strain ATCC 35984 / DSM 28319 / BCRC 17069 / CCUG 31568 / BM 3577 / RP62A).